The chain runs to 371 residues: Cytochrome b (371 aa).

The next 4 membrane-spanning stretches (helical) occupy residues 32–52 (VGFS…CLAW), 76–98 (FVIR…VHIF), 113–133 (VWAV…IGYV), and 179–199 (LHVL…MHLF). His82 and His96 together coordinate heme b. Heme b is bound by residues His183 and His197. His202 is an a ubiquinone binding site. Transmembrane regions (helical) follow at residues 227 to 247 (FYLR…YFIF), 296 to 316 (LMVI…LWFV), 329 to 349 (LILF…ILAY), and 350 to 370 (PIWM…VCRL).

Belongs to the cytochrome b family. The main subunits of complex b-c1 are: cytochrome b, cytochrome c1 and the Rieske protein. Heme b is required as a cofactor.

The protein localises to the mitochondrion inner membrane. Its function is as follows. Component of the ubiquinol-cytochrome c reductase complex (complex III or cytochrome b-c1 complex) that is part of the mitochondrial respiratory chain. The b-c1 complex mediates electron transfer from ubiquinol to cytochrome c. Contributes to the generation of a proton gradient across the mitochondrial membrane that is then used for ATP synthesis. This chain is Cytochrome b (MT-CYB), found in Leishmania tarentolae (Sauroleishmania tarentolae).